We begin with the raw amino-acid sequence, 267 residues long: Zerumbone synthase (267 aa).

NAD(+) is bound at residue 9–33; it reads LVTGGASGIGESIARLFIEHGAKIC. Residue Ser142 participates in substrate binding. Tyr155 acts as the Proton acceptor in catalysis.

The protein belongs to the short-chain dehydrogenases/reductases (SDR) family. As to expression, expressed in leaves, stems and rhizomes.

The enzyme catalyses 10-hydroxy-alpha-humulene + NAD(+) = zerumbone + NADH + H(+). Functionally, catalyzes 8-hydroxy-alpha-humulene into zerumbone in presence of NAD. Also converts borneol to camphor in vitro. Zerumbone is a highly promising multi-anticancer agent. This is Zerumbone synthase (ZSD1) from Zingiber zerumbet (Shampoo ginger).